Reading from the N-terminus, the 424-residue chain is UDP-N-acetylglucosamine 1-carboxyvinyltransferase (424 aa).

Phosphoenolpyruvate is bound at residue 22–23 (KN). Arginine 93 serves as a coordination point for UDP-N-acetyl-alpha-D-glucosamine. Cysteine 117 functions as the Proton donor in the catalytic mechanism. Residue cysteine 117 is modified to 2-(S-cysteinyl)pyruvic acid O-phosphothioketal. Residues 122–126 (RPIDL), aspartate 307, and valine 329 each bind UDP-N-acetyl-alpha-D-glucosamine.

It belongs to the EPSP synthase family. MurA subfamily.

Its subcellular location is the cytoplasm. It catalyses the reaction phosphoenolpyruvate + UDP-N-acetyl-alpha-D-glucosamine = UDP-N-acetyl-3-O-(1-carboxyvinyl)-alpha-D-glucosamine + phosphate. Its pathway is cell wall biogenesis; peptidoglycan biosynthesis. In terms of biological role, cell wall formation. Adds enolpyruvyl to UDP-N-acetylglucosamine. The polypeptide is UDP-N-acetylglucosamine 1-carboxyvinyltransferase (Chlorobium limicola (strain DSM 245 / NBRC 103803 / 6330)).